We begin with the raw amino-acid sequence, 369 residues long: Alanine racemase (369 aa).

Lys35 (proton acceptor; specific for D-alanine) is an active-site residue. Lys35 is subject to N6-(pyridoxal phosphate)lysine. Residue Arg130 coordinates substrate. The Proton acceptor; specific for L-alanine role is filled by Tyr257. Position 305 (Met305) interacts with substrate.

The protein belongs to the alanine racemase family. Pyridoxal 5'-phosphate serves as cofactor.

It carries out the reaction L-alanine = D-alanine. The protein operates within amino-acid biosynthesis; D-alanine biosynthesis; D-alanine from L-alanine: step 1/1. Functionally, catalyzes the interconversion of L-alanine and D-alanine. May also act on other amino acids. This is Alanine racemase (alr) from Paracidovorax citrulli (strain AAC00-1) (Acidovorax citrulli).